The sequence spans 668 residues: DNA damage-responsive serine/threonine-protein kinase RqkA (668 aa).

The region spanning 13–272 (YELLALLGEG…SGAALAHLWA (260 aa)) is the Protein kinase domain. Residues 19–27 (LGEGGSAQV) and Lys42 contribute to the ATP site. The active-site Proton acceptor is the Asp137.

Belongs to the protein kinase superfamily. Ser/Thr protein kinase family. Pyrroloquinoline quinone serves as cofactor. Post-translationally, autophosphorylated.

It carries out the reaction L-seryl-[protein] + ATP = O-phospho-L-seryl-[protein] + ADP + H(+). The enzyme catalyses L-threonyl-[protein] + ATP = O-phospho-L-threonyl-[protein] + ADP + H(+). Its activity is regulated as follows. Autokinase activity is stimulated by DNA damage. Stimulated by PQQ and DNA ends in vitro. Plays an important role in radiation resistance and DNA double-strand break (DSB) repair. Involved in transcriptional regulation of genes important for bacterial stress response. Phosphorylates PprA in vitro. This chain is DNA damage-responsive serine/threonine-protein kinase RqkA (rqkA), found in Deinococcus radiodurans (strain ATCC 13939 / DSM 20539 / JCM 16871 / CCUG 27074 / LMG 4051 / NBRC 15346 / NCIMB 9279 / VKM B-1422 / R1).